The chain runs to 216 residues: Thymidine kinase (216 aa).

ATP is bound by residues 9-16 and 86-89; these read GPMDSGKS and DEAQ. The active-site Proton acceptor is the Glu-87.

Belongs to the thymidine kinase family. In terms of assembly, homotetramer.

The protein resides in the cytoplasm. It catalyses the reaction thymidine + ATP = dTMP + ADP + H(+). This is Thymidine kinase from Cutibacterium acnes (strain DSM 16379 / KPA171202) (Propionibacterium acnes).